The chain runs to 76 residues: Bowman-Birk type proteinase inhibitor DE-3 (76 aa).

Cystine bridges form between cysteine 16-cysteine 70, cysteine 17-cysteine 32, cysteine 20-cysteine 66, cysteine 22-cysteine 30, cysteine 40-cysteine 47, cysteine 44-cysteine 59, and cysteine 49-cysteine 57.

It belongs to the Bowman-Birk serine protease inhibitor family.

The polypeptide is Bowman-Birk type proteinase inhibitor DE-3 (Macrotyloma axillare (Perennial horse gram)).